The primary structure comprises 200 residues: dTTP/UTP pyrophosphatase (200 aa).

Residue aspartate 81 is the Proton acceptor of the active site.

This sequence belongs to the Maf family. YhdE subfamily. It depends on a divalent metal cation as a cofactor.

It is found in the cytoplasm. The catalysed reaction is dTTP + H2O = dTMP + diphosphate + H(+). It carries out the reaction UTP + H2O = UMP + diphosphate + H(+). Functionally, nucleoside triphosphate pyrophosphatase that hydrolyzes dTTP and UTP. May have a dual role in cell division arrest and in preventing the incorporation of modified nucleotides into cellular nucleic acids. The protein is dTTP/UTP pyrophosphatase of Cupriavidus pinatubonensis (strain JMP 134 / LMG 1197) (Cupriavidus necator (strain JMP 134)).